A 91-amino-acid chain; its full sequence is MKWLVAVLVVFVAMFQYRLWVGEGSIADVVRLEREIARQEADNERLRERNKQLAAEVDALKTGDDAIEERARSDMGMIKEGETFFMIIDDQ.

Topologically, residues 1–3 (MKW) are cytoplasmic. The chain crosses the membrane as a helical span at residues 4–21 (LVAVLVVFVAMFQYRLWV). Over 22–91 (GEGSIADVVR…ETFFMIIDDQ (70 aa)) the chain is Periplasmic. Positions 23–63 (EGSIADVVRLEREIARQEADNERLRERNKQLAAEVDALKTG) form a coiled coil.

This sequence belongs to the FtsB family. Part of a complex composed of FtsB, FtsL and FtsQ.

The protein resides in the cell inner membrane. Essential cell division protein. May link together the upstream cell division proteins, which are predominantly cytoplasmic, with the downstream cell division proteins, which are predominantly periplasmic. The chain is Cell division protein FtsB from Teredinibacter turnerae (strain ATCC 39867 / T7901).